Here is a 123-residue protein sequence, read N- to C-terminus: Undecaprenol kinase (123 aa).

Residues 1-33 (MDSKDHRNELNRFFKSFVHAGRGIWETARTERN) lie on the Cytoplasmic side of the membrane. The helical transmembrane segment at 34 to 51 (FQFHAAAACAVLICGFLV) threads the bilayer. The Extracellular segment spans residues 52–57 (ELSIIE). Residues 58-74 (WMIIFLLIGGMFSLELL) traverse the membrane as a helical segment. Over 75–99 (NTAIEHTVDLITDKHHPLAKAAKDA) the chain is Cytoplasmic. Residues 100–120 (AAGAVCVFAVISCIIGLLIFL) traverse the membrane as a helical segment. The Extracellular segment spans residues 121 to 123 (PKL).

The protein belongs to the bacterial diacylglycerol kinase family.

The protein resides in the cell membrane. It carries out the reaction di-trans,octa-cis-undecaprenol + ATP = di-trans,octa-cis-undecaprenyl phosphate + ADP + H(+). In terms of biological role, catalyzes the phosphorylation of undecaprenol in vitro, which is probably the physiological substrate. Exhibits no detectable activity against other substrates such as monoacylglycerol, ceramide, or diacylglycerol (DAG). Appears indispensable for the maintenance of spore stability and viability in B.subtilis. The chain is Undecaprenol kinase (dgkA) from Bacillus subtilis (strain 168).